Here is a 243-residue protein sequence, read N- to C-terminus: DNA repair protein RecO (243 aa).

Belongs to the RecO family.

Involved in DNA repair and RecF pathway recombination. This is DNA repair protein RecO from Xylella fastidiosa (strain M12).